The chain runs to 86 residues: Colicin-E9 immunity protein (86 aa).

The protein belongs to the colicins ColE2/ColE8/ColE9 and pyocins S1/S2 family.

Functionally, this protein is able to protect a cell, which harbors the plasmid ColE9 encoding colicin E9, against colicin E9, it binds specifically to the DNase-type colicin and inhibits its bactericidal activity. The sequence is that of Colicin-E9 immunity protein (imm) from Escherichia coli.